The primary structure comprises 306 residues: Transcription initiation factor IIB (306 aa).

A run of 2 repeats spans residues 122 to 205 (NELE…LREL) and 216 to 297 (DYVT…ELTQ).

The protein belongs to the TFIIB family.

Its function is as follows. Stabilizes TBP binding to an archaeal box-A promoter. Also responsible for recruiting RNA polymerase II to the pre-initiation complex (DNA-TBP-TFIIB). The protein is Transcription initiation factor IIB of Saccharolobus shibatae (strain ATCC 51178 / DSM 5389 / JCM 8931 / NBRC 15437 / B12) (Sulfolobus shibatae).